The chain runs to 178 residues: Extracellular fatty acid-binding protein (178 aa).

Positions Met1–Ala20 are cleaved as a signal peptide. At Ala21 the chain carries Blocked amino end (Ala). Residue Thr43 participates in enterobactin binding. 1-tetradecanoyl-sn-glycerol 3-phosphate is bound by residues Tyr72 and Lys104. Residues Cys80 and Cys173 are joined by a disulfide bond. Enterobactin-binding residues include Lys104, Arg123, and Arg134. Arg134 to Tyr136 provides a ligand contact to 1-tetradecanoyl-sn-glycerol 3-phosphate.

Belongs to the calycin superfamily. Lipocalin family. As to quaternary structure, monomer. Does not seem to be glycosylated. As to expression, expressed in egg white (at protein level). Expressed in the magnum of the oviduct (at protein level). Preferentially synthesized in nonproliferating cells.

It localises to the secreted. Siderocalin-like lipocalin tightly binding a variety of bacterial ferric siderophores, also binds long-chain unsaturated fatty acids such as linoleic acid, oleic acid, arachidonic acid and, with a lower affinity, long chain saturated fatty acids such as steraic acid. May act as an antibacterial factor, through dual ligand specificity, both as a siderophore-sequestrating molecule and a lysophosphatidic acid (LPA) sensor. This Gallus gallus (Chicken) protein is Extracellular fatty acid-binding protein (EXFABP).